Reading from the N-terminus, the 908-residue chain is Putative cell signaling protein HAM1 (908 aa).

Disordered regions lie at residues 1–24 (MSVA…SAVS) and 177–359 (TKAA…EHRQ). Composition is skewed to basic and acidic residues over residues 179–192 (AADK…KLDS), 231–247 (HPRD…DKGK), 261–283 (AKSD…KETG), 306–321 (EQKE…KRDA), and 338–359 (NQEK…EHRQ). The stretch at 255-282 (YNQAQEAKSDAQSKAQDLKSSARDYKET) forms a coiled coil.

In terms of processing, palmitoylated.

May act as a negative regulator of mating during vegetative growth. The chain is Putative cell signaling protein HAM1 from Cryptococcus neoformans var. grubii serotype A (strain H99 / ATCC 208821 / CBS 10515 / FGSC 9487) (Filobasidiella neoformans var. grubii).